Here is a 138-residue protein sequence, read N- to C-terminus: Proline-rich protein 34 (138 aa).

Residues 22-37 (SAPTSPPNPATRPAPG) show a composition bias toward pro residues. 2 disordered regions span residues 22 to 55 (SAPT…PTRG) and 81 to 107 (APRL…SPAR).

The sequence is that of Proline-rich protein 34 (PRR34) from Homo sapiens (Human).